The primary structure comprises 194 residues: ATP-dependent Clp protease proteolytic subunit (194 aa).

Serine 98 acts as the Nucleophile in catalysis. Residue histidine 123 is part of the active site.

The protein belongs to the peptidase S14 family. Fourteen ClpP subunits assemble into 2 heptameric rings which stack back to back to give a disk-like structure with a central cavity, resembling the structure of eukaryotic proteasomes.

It is found in the cytoplasm. It carries out the reaction Hydrolysis of proteins to small peptides in the presence of ATP and magnesium. alpha-casein is the usual test substrate. In the absence of ATP, only oligopeptides shorter than five residues are hydrolyzed (such as succinyl-Leu-Tyr-|-NHMec, and Leu-Tyr-Leu-|-Tyr-Trp, in which cleavage of the -Tyr-|-Leu- and -Tyr-|-Trp bonds also occurs).. Its function is as follows. Cleaves peptides in various proteins in a process that requires ATP hydrolysis. Has a chymotrypsin-like activity. Plays a major role in the degradation of misfolded proteins. This chain is ATP-dependent Clp protease proteolytic subunit, found in Wigglesworthia glossinidia brevipalpis.